The following is a 324-amino-acid chain: 4-hydroxy-3-methylbut-2-enyl diphosphate reductase (324 aa).

Cys-28 serves as a coordination point for [4Fe-4S] cluster. (2E)-4-hydroxy-3-methylbut-2-enyl diphosphate contacts are provided by His-57 and His-90. Dimethylallyl diphosphate is bound by residues His-57 and His-90. His-57 and His-90 together coordinate isopentenyl diphosphate. A [4Fe-4S] cluster-binding site is contributed by Cys-112. His-140 lines the (2E)-4-hydroxy-3-methylbut-2-enyl diphosphate pocket. A dimethylallyl diphosphate-binding site is contributed by His-140. His-140 serves as a coordination point for isopentenyl diphosphate. Catalysis depends on Glu-142, which acts as the Proton donor. Position 180 (Thr-180) interacts with (2E)-4-hydroxy-3-methylbut-2-enyl diphosphate. Position 210 (Cys-210) interacts with [4Fe-4S] cluster. Residues Ser-238, Ser-239, Asn-240, and Ser-282 each contribute to the (2E)-4-hydroxy-3-methylbut-2-enyl diphosphate site. The dimethylallyl diphosphate site is built by Ser-238, Ser-239, Asn-240, and Ser-282. Isopentenyl diphosphate is bound by residues Ser-238, Ser-239, Asn-240, and Ser-282.

Belongs to the IspH family. It depends on [4Fe-4S] cluster as a cofactor.

The enzyme catalyses isopentenyl diphosphate + 2 oxidized [2Fe-2S]-[ferredoxin] + H2O = (2E)-4-hydroxy-3-methylbut-2-enyl diphosphate + 2 reduced [2Fe-2S]-[ferredoxin] + 2 H(+). It catalyses the reaction dimethylallyl diphosphate + 2 oxidized [2Fe-2S]-[ferredoxin] + H2O = (2E)-4-hydroxy-3-methylbut-2-enyl diphosphate + 2 reduced [2Fe-2S]-[ferredoxin] + 2 H(+). It participates in isoprenoid biosynthesis; dimethylallyl diphosphate biosynthesis; dimethylallyl diphosphate from (2E)-4-hydroxy-3-methylbutenyl diphosphate: step 1/1. It functions in the pathway isoprenoid biosynthesis; isopentenyl diphosphate biosynthesis via DXP pathway; isopentenyl diphosphate from 1-deoxy-D-xylulose 5-phosphate: step 6/6. Its function is as follows. Catalyzes the conversion of 1-hydroxy-2-methyl-2-(E)-butenyl 4-diphosphate (HMBPP) into a mixture of isopentenyl diphosphate (IPP) and dimethylallyl diphosphate (DMAPP). Acts in the terminal step of the DOXP/MEP pathway for isoprenoid precursor biosynthesis. This Ralstonia nicotianae (strain ATCC BAA-1114 / GMI1000) (Ralstonia solanacearum) protein is 4-hydroxy-3-methylbut-2-enyl diphosphate reductase.